The chain runs to 646 residues: MNINQLILRNLKKNLRNYYLYVFALIFSVALYFAFVTLQYDPAINEVKASIKGAAAIKTASILLVAVVAIFILYANTIFIKRRSKEIGLFQLIGMTKHKIFRILSAENVMLYFGSLAIGVAAGFSISKLVLMILFKIVDVKADAKLHFSEQALVQTVIVFCGIYLLIMIMNYTFIKKQSILSLFKVTSSTEDKVKKISFFQMLIGALGIVLILTGYYVSSELFGGKFKTINELFVAMSFILGSVIIGTFLFYKGSVTFISNIIRKSKGGYLNISEVLSLSSIMFRMKSNALLLTIITTVSALAIGLLSLAYISYYSSEKTAEQNVAADFSFMNEKDAKLFENKLRESNISFVKKATPVLQANVDIANIMDGTPKEMQGDPGNMQLAVVSDKDVKGVDVAAGEAVFSGYTDLLQKIMVFKDSGVIKVKSKHETQPLKYKGLREEFLVSYTFTSGGMPAVIVDDSLFKQLDKDKDPRIQLAQSTFIGVNVKHDDQMEKANELFQQVNKKNEHLSRLDTSAAQKSLFGMVMFIVGFLGLTFLITSGCILYFKQMGESEDEKPSYTILRKLGFTQGDLIKGIRIKQMYNFGIPLVVGLFHSYFAVQSGWFLFGSEVWAPMIMVMVLYTALYSIFGFLSVLYYKKVIKSSL.

10 helical membrane-spanning segments follow: residues 18 to 38, 60 to 80, 115 to 135, 152 to 172, 197 to 217, 232 to 252, 290 to 310, 526 to 546, 588 to 608, and 616 to 636; these read YYLY…FVTL, ASIL…TIFI, SLAI…MILF, ALVQ…IMNY, ISFF…TGYY, ELFV…FLFY, ALLL…LSLA, MVMF…GCIL, IPLV…WFLF, and MIMV…LSVL.

The protein belongs to the ABC-4 integral membrane protein family. The complex is composed of two ATP-binding proteins (BceA) and two transmembrane proteins (BceB).

The protein resides in the cell membrane. Its function is as follows. Part of the ABC transporter complex BceAB (TC 3.A.1.123.5) involved in bacitracin export. This is Bacitracin export permease protein BceB (bceB) from Bacillus subtilis (strain 168).